The chain runs to 362 residues: Photosystem II protein D1 3 (362 aa).

Helical transmembrane passes span 29-46, 118-133, and 142-156; these read YVGW…SATI, HFLI…EWEL, and WICI…AATA. His-118 lines the chlorophyll a pocket. A pheophytin a-binding site is contributed by Tyr-126. Residues Asp-170 and Glu-189 each contribute to the [CaMn4O5] cluster site. The helical transmembrane segment at 197 to 218 threads the bilayer; the sequence is FHMLGVAGVFGGALISAMHGSL. Chlorophyll a is bound at residue His-198. A quinone contacts are provided by residues His-215 and 264–265; that span reads AF. Residue His-215 participates in Fe cation binding. A Fe cation-binding site is contributed by His-274. The helical transmembrane segment at 276–290 threads the bilayer; that stretch reads IMAAFPVIGIWFTSL. Positions 334, 335, 344, and 346 each coordinate [CaMn4O5] cluster. Residues 347–362 constitute a propeptide that is removed on maturation; the sequence is GTESAPVAVSTAKVGG.

The protein belongs to the reaction center PufL/M/PsbA/D family. PSII is composed of 1 copy each of membrane proteins PsbA, PsbB, PsbC, PsbD, PsbE, PsbF, PsbH, PsbI, PsbJ, PsbK, PsbL, PsbM, PsbT, PsbX, Psb30/Ycf12, peripheral proteins PsbO, CyanoQ (PsbQ), PsbU, PsbV and a large number of cofactors. It forms dimeric complexes. Requires The D1/D2 heterodimer binds P680, chlorophylls that are the primary electron donor of PSII, and subsequent electron acceptors. It shares a non-heme iron and each subunit binds pheophytin, quinone, additional chlorophylls, carotenoids and lipids. D1 provides most of the ligands for the Mn4-Ca-O5 cluster of the oxygen-evolving complex (OEC). There is also a Cl(-1) ion associated with D1 and D2, which is required for oxygen evolution. The PSII complex binds additional chlorophylls, carotenoids and specific lipids. as cofactor. In terms of processing, tyr-161 forms a radical intermediate that is referred to as redox-active TyrZ, YZ or Y-Z. C-terminally processed by CtpA; processing is essential to allow assembly of the oxygen-evolving complex and thus photosynthetic growth.

The protein localises to the cell inner membrane. It carries out the reaction 2 a plastoquinone + 4 hnu + 2 H2O = 2 a plastoquinol + O2. Functionally, photosystem II (PSII) is a light-driven water:plastoquinone oxidoreductase that uses light energy to abstract electrons from H(2)O, generating O(2) and a proton gradient subsequently used for ATP formation. It consists of a core antenna complex that captures photons, and an electron transfer chain that converts photonic excitation into a charge separation. The D1/D2 (PsbA/PsbD) reaction center heterodimer binds P680, the primary electron donor of PSII as well as several subsequent electron acceptors. The polypeptide is Photosystem II protein D1 3 (Gloeobacter violaceus (strain ATCC 29082 / PCC 7421)).